We begin with the raw amino-acid sequence, 357 residues long: 3-isopropylmalate dehydrogenase (357 aa).

Substrate contacts are provided by Arg-97, Arg-107, Arg-135, and Asp-224. Residues Asp-224, Asp-248, and Asp-252 each coordinate Mg(2+). An NAD(+)-binding site is contributed by 282-294 (GSAPDIAGQDKAN).

The protein belongs to the isocitrate and isopropylmalate dehydrogenases family. LeuB type 1 subfamily. Homodimer. It depends on Mg(2+) as a cofactor. Requires Mn(2+) as cofactor.

It is found in the cytoplasm. The enzyme catalyses (2R,3S)-3-isopropylmalate + NAD(+) = 4-methyl-2-oxopentanoate + CO2 + NADH. It participates in amino-acid biosynthesis; L-leucine biosynthesis; L-leucine from 3-methyl-2-oxobutanoate: step 3/4. In terms of biological role, catalyzes the oxidation of 3-carboxy-2-hydroxy-4-methylpentanoate (3-isopropylmalate) to 3-carboxy-4-methyl-2-oxopentanoate. The product decarboxylates to 4-methyl-2 oxopentanoate. This is 3-isopropylmalate dehydrogenase from Synechococcus sp. (strain CC9605).